The primary structure comprises 85 residues: Conotoxin Lt28.3 (85 aa).

The N-terminal stretch at 1-21 (MPKLEMMLLVLLILPLCYIDA) is a signal peptide. A propeptide spanning residues 22-40 (VGPLPPWNMEDEIIEHWQK) is cleaved from the precursor.

Belongs to the conotoxin D superfamily. Post-translationally, contains 5 disulfide bonds. In terms of tissue distribution, expressed by the venom duct.

It localises to the secreted. In terms of biological role, probable neurotoxin. This Conus litteratus (Lettered cone) protein is Conotoxin Lt28.3.